Reading from the N-terminus, the 257-residue chain is Triosephosphate isomerase (257 aa).

Substrate is bound at residue 9–11 (NWK). The Electrophile role is filled by histidine 97. The active-site Proton acceptor is the glutamate 169. Substrate-binding positions include glycine 175, serine 214, and 235 to 236 (GG).

This sequence belongs to the triosephosphate isomerase family. In terms of assembly, homodimer.

It localises to the cytoplasm. The enzyme catalyses D-glyceraldehyde 3-phosphate = dihydroxyacetone phosphate. It participates in carbohydrate biosynthesis; gluconeogenesis. It functions in the pathway carbohydrate degradation; glycolysis; D-glyceraldehyde 3-phosphate from glycerone phosphate: step 1/1. Functionally, involved in the gluconeogenesis. Catalyzes stereospecifically the conversion of dihydroxyacetone phosphate (DHAP) to D-glyceraldehyde-3-phosphate (G3P). The protein is Triosephosphate isomerase of Vibrio cholerae serotype O1 (strain ATCC 39315 / El Tor Inaba N16961).